The primary structure comprises 390 residues: Succinyl-diaminopimelate desuccinylase (390 aa).

H74 contacts Zn(2+). Residue D76 is part of the active site. D107 lines the Zn(2+) pocket. E140 acts as the Proton acceptor in catalysis. Zn(2+)-binding residues include E141, E169, and H363.

This sequence belongs to the peptidase M20A family. DapE subfamily. As to quaternary structure, homodimer. It depends on Zn(2+) as a cofactor. The cofactor is Co(2+).

The catalysed reaction is N-succinyl-(2S,6S)-2,6-diaminopimelate + H2O = (2S,6S)-2,6-diaminopimelate + succinate. The protein operates within amino-acid biosynthesis; L-lysine biosynthesis via DAP pathway; LL-2,6-diaminopimelate from (S)-tetrahydrodipicolinate (succinylase route): step 3/3. In terms of biological role, catalyzes the hydrolysis of N-succinyl-L,L-diaminopimelic acid (SDAP), forming succinate and LL-2,6-diaminopimelate (DAP), an intermediate involved in the bacterial biosynthesis of lysine and meso-diaminopimelic acid, an essential component of bacterial cell walls. The chain is Succinyl-diaminopimelate desuccinylase from Bartonella henselae (strain ATCC 49882 / DSM 28221 / CCUG 30454 / Houston 1) (Rochalimaea henselae).